Consider the following 875-residue polypeptide: Leucine--tRNA ligase (875 aa).

The 'HIGH' region signature appears at 43–53 (PYPSGRIHMGH). The short motif at 633-637 (KMSKS) is the 'KMSKS' region element. K636 provides a ligand contact to ATP.

The protein belongs to the class-I aminoacyl-tRNA synthetase family.

It localises to the cytoplasm. It catalyses the reaction tRNA(Leu) + L-leucine + ATP = L-leucyl-tRNA(Leu) + AMP + diphosphate. In Bartonella bacilliformis (strain ATCC 35685 / KC583 / Herrer 020/F12,63), this protein is Leucine--tRNA ligase.